The sequence spans 98 residues: Small ribosomal subunit protein eS24 (98 aa).

It belongs to the eukaryotic ribosomal protein eS24 family.

The protein is Small ribosomal subunit protein eS24 of Thermococcus onnurineus (strain NA1).